A 459-amino-acid chain; its full sequence is MSNGKIVQIIGAVVDVEFPRDAMPKVMEALKMQAPELTFEVQQQLGDGVVRTIAMGSTDGLRRGMDVLSTGNPIMVPVGQKTLGRIMNVLGDPVDEAGPIGAETTMPIHRKAPAYADQAATVEILETGIKVIDLIMPIAKGGKVGLFGGAGVGKTVTLMELIRNIAVQHSGFSVFAGVGERTREGNDFYHEMKEGGVLDKVALVYGQMNEPPGNRLRVALTGLTMAEYFRDEGRDVLLFVDNIYRYTLAGTEVSALLGRMPSAVGYQPTLADEMGRLQERITSTKTGSITSFQAVYVPADDLTDPSPATTFAHLDATLVLSRQVAELGIYPAVDPLDSTSRILDPQVVGEEHYTVARKVQGTLQKYKELRDIIAILGMDELSPEDKLAVSRARKLQRFLSQPFFVAEVFTGAPGKYVTLKDTIAGFKAIVEGEYDHLPEQAFYMVGGIEEAVEKAKTIQ.

An ATP-binding site is contributed by 148-155; that stretch reads GGAGVGKT.

Belongs to the ATPase alpha/beta chains family. In terms of assembly, F-type ATPases have 2 components, CF(1) - the catalytic core - and CF(0) - the membrane proton channel. CF(1) has five subunits: alpha(3), beta(3), gamma(1), delta(1), epsilon(1). CF(0) has three main subunits: a(1), b(2) and c(9-12). The alpha and beta chains form an alternating ring which encloses part of the gamma chain. CF(1) is attached to CF(0) by a central stalk formed by the gamma and epsilon chains, while a peripheral stalk is formed by the delta and b chains.

The protein localises to the cell inner membrane. It catalyses the reaction ATP + H2O + 4 H(+)(in) = ADP + phosphate + 5 H(+)(out). Its function is as follows. Produces ATP from ADP in the presence of a proton gradient across the membrane. The catalytic sites are hosted primarily by the beta subunits. The protein is ATP synthase subunit beta of Thiobacillus denitrificans (strain ATCC 25259 / T1).